The primary structure comprises 128 residues: Fluoride-specific ion channel FluC 1 (128 aa).

The next 4 helical transmembrane spans lie at 10–30, 32–52, 59–79, and 93–113; these read VAFF…AFSF, GTVI…YFFL, AWLT…FSSF, and FGAL…AWAG. 2 residues coordinate Na(+): Gly-71 and Thr-74.

It belongs to the fluoride channel Fluc/FEX (TC 1.A.43) family.

The protein localises to the cell membrane. It carries out the reaction fluoride(in) = fluoride(out). With respect to regulation, na(+) is not transported, but it plays an essential structural role and its presence is essential for fluoride channel function. Fluoride-specific ion channel. Important for reducing fluoride concentration in the cell, thus reducing its toxicity. This Lactobacillus delbrueckii subsp. bulgaricus (strain ATCC 11842 / DSM 20081 / BCRC 10696 / JCM 1002 / NBRC 13953 / NCIMB 11778 / NCTC 12712 / WDCM 00102 / Lb 14) protein is Fluoride-specific ion channel FluC 1.